The following is a 197-amino-acid chain: Ribosome maturation factor RimP (197 aa).

This sequence belongs to the RimP family.

It is found in the cytoplasm. Functionally, required for maturation of 30S ribosomal subunits. The sequence is that of Ribosome maturation factor RimP from Acidovorax sp. (strain JS42).